The chain runs to 479 residues: NADH-quinone oxidoreductase subunit N (479 aa).

14 consecutive transmembrane segments (helical) span residues 3-23 (MLYG…FQLI), 40-60 (IGFA…FNGI), 77-97 (IIIL…IKVA), 102-122 (HSEY…LVSA), 125-145 (FMVM…LTTF), 159-179 (YFIL…LVYG), 200-220 (MAVL…KLSI), 234-254 (APLV…LALL), 268-288 (FFYI…VGAF), 299-319 (FIAY…VANS), 327-347 (ISYF…AIII), 373-393 (SILI…AGFI), 409-429 (ELII…LNIV), and 452-472 (LVSI…MLFG).

The protein belongs to the complex I subunit 2 family. In terms of assembly, NDH-1 is composed of 14 different subunits. Subunits NuoA, H, J, K, L, M, N constitute the membrane sector of the complex.

It is found in the cell inner membrane. It catalyses the reaction a quinone + NADH + 5 H(+)(in) = a quinol + NAD(+) + 4 H(+)(out). Functionally, NDH-1 shuttles electrons from NADH, via FMN and iron-sulfur (Fe-S) centers, to quinones in the respiratory chain. The immediate electron acceptor for the enzyme in this species is believed to be ubiquinone. Couples the redox reaction to proton translocation (for every two electrons transferred, four hydrogen ions are translocated across the cytoplasmic membrane), and thus conserves the redox energy in a proton gradient. This chain is NADH-quinone oxidoreductase subunit N, found in Orientia tsutsugamushi (strain Ikeda) (Rickettsia tsutsugamushi).